A 238-amino-acid chain; its full sequence is Ribonuclease 3 (238 aa).

The region spanning 8–135 is the RNase III domain; that stretch reads VAELERRIGY…LIAALYIDGG (128 aa). Glu48 provides a ligand contact to Mg(2+). Asp52 is a catalytic residue. Mg(2+)-binding residues include Asp121 and Glu124. Glu124 is a catalytic residue. One can recognise a DRBM domain in the interval 161-230; sequence DPKTQLQEWV…AQCMLLKREG (70 aa).

The protein belongs to the ribonuclease III family. As to quaternary structure, homodimer. Requires Mg(2+) as cofactor.

The protein localises to the cytoplasm. It catalyses the reaction Endonucleolytic cleavage to 5'-phosphomonoester.. Digests double-stranded RNA. Involved in the processing of primary rRNA transcript to yield the immediate precursors to the large and small rRNAs (23S and 16S). Processes some mRNAs, and tRNAs when they are encoded in the rRNA operon. Processes pre-crRNA and tracrRNA of type II CRISPR loci if present in the organism. This is Ribonuclease 3 from Phenylobacterium zucineum (strain HLK1).